The following is a 480-amino-acid chain: MSSQVSSPVRVRFAPSPTGYLHVGGARTALFNWLYARHVGGTLVLRIEDTDLERSTPEMVEGILVGMRWLGLNWDEGPYYQTQRMDLYKAAAEKLVASGHAYYCFCSKEGLEQRRKAATAAGRAPQYDESCRKIGREDAAARKQGGAPCAVRFAVPETGNTKFQDAVFGEVEFANPELEDFVLLRSDGVPTYHLSVVVDDVDMKISHILRGADHISNTPKQVLLYQAMGATLPIFAHVPLILGPDKTRLSKRHGATSVISYSDEGIVPEAFRNFLALLGWTAPEGSPEKLGDEELIKLFSLEGISHSNAVFDRPKLDWFNTEYIRAYPAEKLLPLIQKEWQKVGLTPANPDAQHLVATIELLKPRARNLKDFAGSFKAFFTDDYANDPEAVEKFLKDPAVREMLVELGERYANAGEFTEQSTEQVLRDLAAEKGVKAGGLINGARVALTGQAVAPSLFAVMVNLGREKTVSRLRRAKEIQ.

The 'HIGH' region motif lies at 15–25; the sequence is PSPTGYLHVGG. The 'KMSKS' region motif lies at 248 to 252; it reads RLSKR. Lysine 251 serves as a coordination point for ATP.

It belongs to the class-I aminoacyl-tRNA synthetase family. Glutamate--tRNA ligase type 1 subfamily. Monomer.

It localises to the cytoplasm. It catalyses the reaction tRNA(Glu) + L-glutamate + ATP = L-glutamyl-tRNA(Glu) + AMP + diphosphate. Its function is as follows. Catalyzes the attachment of glutamate to tRNA(Glu) in a two-step reaction: glutamate is first activated by ATP to form Glu-AMP and then transferred to the acceptor end of tRNA(Glu). The protein is Glutamate--tRNA ligase 2 of Koribacter versatilis (strain Ellin345).